A 244-amino-acid chain; its full sequence is Serine-rich single-pass membrane protein 1 (244 aa).

The helical transmembrane segment at 35 to 55 (CGTIGNFLLWYFVIVFVLMFF) threads the bilayer. Disordered regions lie at residues 65-112 (DKKD…LTPV), 132-191 (QSQF…LGSY), and 213-244 (HSQQ…FSKF). Residues 80 to 94 (ASKETSYKWQSKDGA) are compositionally biased toward basic and acidic residues. Polar residues-rich tracts occupy residues 97-112 (PSQT…LTPV) and 132-142 (QSQFNEVNQNQ). Residues 161–176 (SWKESESEHHPSPDSI) are compositionally biased toward basic and acidic residues. Polar residues predominate over residues 231–244 (ESSISDINTKFSKF).

It localises to the membrane. The protein is Serine-rich single-pass membrane protein 1 (SSMEM1) of Macaca fascicularis (Crab-eating macaque).